Consider the following 319-residue polypeptide: Annexin A4 (319 aa).

The residue at position 7 (Thr-7) is a Phosphothreonine. The residue at position 12 (Ser-12) is a Phosphoserine. Annexin repeat units follow at residues 14–85, 86–157, 169–241, and 245–316; these read FNAT…GLMT, PTVL…SLSA, ALMK…AIVK, and SKPS…VLCG. Residues Lys-213, Lys-293, and Lys-300 each carry the N6-acetyllysine modification.

Belongs to the annexin family.

The protein localises to the zymogen granule membrane. Its function is as follows. Calcium/phospholipid-binding protein which promotes membrane fusion and is involved in exocytosis. The protein is Annexin A4 (Anxa4) of Mus musculus (Mouse).